Consider the following 146-residue polypeptide: DNA-directed RNA polymerases II, IV and V subunit 8B (146 aa).

Belongs to the eukaryotic RPB8 RNA polymerase subunit family. Component of the RNA polymerase II, IV and V complexes. Associates with the mediator complex.

It is found in the nucleus. Functionally, DNA-dependent RNA polymerase catalyzes the transcription of DNA into RNA using the four ribonucleoside triphosphates as substrates. Component of RNA polymerase II which synthesizes mRNA precursors and many functional non-coding RNAs. Pol II is the central component of the basal RNA polymerase II transcription machinery. It is composed of mobile elements that move relative to each other. Component of RNA polymerases IV and V which mediate short-interfering RNAs (siRNA) accumulation and subsequent RNA-directed DNA methylation-dependent (RdDM) transcriptional gene silencing (TGS) of endogenous repeated sequences, including transposable elements. The chain is DNA-directed RNA polymerases II, IV and V subunit 8B (NRPB8B) from Arabidopsis thaliana (Mouse-ear cress).